We begin with the raw amino-acid sequence, 232 residues long: MKYLSIISIVALALAGDSPISTDSKGKAPLVARFKKTSKSDIEGTIKFEPANNGTVLVSVDLTGLPSGVGPYPYHVHEKPVPESKNCTATGMHFNPFNGSTTAKTPAALELGDLSGRHGNITSESFEVEYDDSYISLNKDSKAYIGGLSIVVHSNNNTRLNCANITTLDEGDDTASAATWSNSSSSSSSSSKNSTNGSSGSSTSASQGSGAGRAEISGFLAAGIAGVVAALI.

Residues 1-15 form the signal peptide; that stretch reads MKYLSIISIVALALA. N-linked (GlcNAc...) asparagine glycosylation is present at Asn53. Residues His75 and His77 each coordinate Cu cation. The N-linked (GlcNAc...) asparagine glycan is linked to Asn86. His93 contributes to the Cu cation binding site. Position 93 (His93) interacts with Zn(2+). Residue Asn98 is glycosylated (N-linked (GlcNAc...) asparagine). Asp113 is a binding site for Zn(2+). Residue Asn120 is glycosylated (N-linked (GlcNAc...) asparagine). His153 serves as a coordination point for Cu cation. Asn156, Asn164, Asn182, Asn193, and Asn196 each carry an N-linked (GlcNAc...) asparagine glycan. Low complexity predominate over residues 174-208; sequence TASAATWSNSSSSSSSSSKNSTNGSSGSSTSASQG. Positions 174–211 are disordered; the sequence is TASAATWSNSSSSSSSSSKNSTNGSSGSSTSASQGSGA. Ser209 is lipidated: GPI-anchor amidated serine. A propeptide spans 210-232 (removed in mature form); the sequence is GAGRAEISGFLAAGIAGVVAALI. Position 213 (Arg213) interacts with substrate.

Belongs to the Cu-Zn superoxide dismutase family. It depends on Cu cation as a cofactor. The cofactor is Zn(2+). In terms of processing, the GPI-anchor is attached to the protein in the endoplasmic reticulum and serves to target the protein to the cell surface. There, the glucosamine-inositol phospholipid moiety is cleaved off and the GPI-modified mannoprotein is covalently attached via its lipidless GPI glycan remnant to the 1,6-beta-glucan of the outer cell wall layer.

It localises to the secreted. The protein resides in the cell wall. The protein localises to the membrane. It carries out the reaction 2 superoxide + 2 H(+) = H2O2 + O2. In terms of biological role, superoxide dismutases serve to convert damaging superoxide radicals, a key form of ROS, to less damaging hydrogen peroxide that can be converted into water by catalase action. Degrades host-derived reactive oxygen species to escape innate immune surveillance. Involved in the occurrence of miconazole-tolerant persisters in biofilms. Persisters are cells that survive high doses of an antimicrobial agent. This chain is Cell surface superoxide dismutase [Cu-Zn] 4 (SOD4), found in Candida albicans (strain SC5314 / ATCC MYA-2876) (Yeast).